Reading from the N-terminus, the 247-residue chain is Translation initiation factor IF-3 (247 aa).

Disordered regions lie at residues 1 to 20 (MIRE…TNRR) and 188 to 247 (LVRQ…PTAS). The segment at 182–247 (AQKARELVRQ…AAEAQSPTAS (66 aa)) is needed for vegetative and developmental functions, but not for viability. Positions 207–217 (AGKSAAGASSG) are enriched in low complexity. Residues 218–232 (AEEKAEETAEEKKEA) show a composition bias toward basic and acidic residues. The segment covering 233–247 (QAAPAAAEAQSPTAS) has biased composition (low complexity).

It belongs to the IF-3 family. In terms of assembly, monomer.

It is found in the cytoplasm. Functionally, IF-3 binds to the 30S ribosomal subunit and shifts the equilibrium between 70S ribosomes and their 50S and 30S subunits in favor of the free subunits, thus enhancing the availability of 30S subunits on which protein synthesis initiation begins. The protein is Translation initiation factor IF-3 of Myxococcus xanthus.